The following is a 489-amino-acid chain: uncharacterized protein (489 aa).

11 helical membrane-spanning segments follow: residues 29–49 (FIAS…TGLG), 67–87 (LLYA…KYLG), 90–110 (WALA…WYFD), 119–139 (IFTG…TAYI), 152–172 (FIAT…FIAF), 186–206 (AVYI…ILFI), 276–296 (LNNV…TLIL), 308–328 (IIGL…ELGW), 351–371 (GGAL…IVSV), 397–417 (AAGM…LGQG), and 418–438 (IIYF…TSIF).

Its subcellular location is the membrane. This is an uncharacterized protein from Schizosaccharomyces pombe (strain 972 / ATCC 24843) (Fission yeast).